Here is a 236-residue protein sequence, read N- to C-terminus: Small ribosomal subunit protein uS2c (236 aa).

It belongs to the universal ribosomal protein uS2 family.

Its subcellular location is the plastid. The protein resides in the chloroplast. The polypeptide is Small ribosomal subunit protein uS2c (rps2) (Draba nemorosa (Woodland whitlowgrass)).